The sequence spans 91 residues: ATP-dependent Clp protease adapter protein ClpS (91 aa).

It belongs to the ClpS family. Binds to the N-terminal domain of the chaperone ClpA.

Functionally, involved in the modulation of the specificity of the ClpAP-mediated ATP-dependent protein degradation. This chain is ATP-dependent Clp protease adapter protein ClpS, found in Helicobacter pylori (strain ATCC 700392 / 26695) (Campylobacter pylori).